Consider the following 151-residue polypeptide: Acidic phospholipase A2 5 (151 aa).

The signal sequence occupies residues 1-27 (MYPAHLLVLLAVCVSLLGAASIPARPL). Intrachain disulfides connect Cys38–Cys104, Cys54–Cys151, Cys56–Cys72, Cys71–Cys132, Cys78–Cys125, Cys88–Cys118, and Cys111–Cys123. Ca(2+)-binding residues include Tyr55, Gly57, and Gly59. The active site involves His75. Asp76 lines the Ca(2+) pocket. Asp126 is an active-site residue.

The protein belongs to the phospholipase A2 family. Group I subfamily. D49 sub-subfamily. Ca(2+) is required as a cofactor. As to expression, expressed by the venom gland.

Its subcellular location is the secreted. It carries out the reaction a 1,2-diacyl-sn-glycero-3-phosphocholine + H2O = a 1-acyl-sn-glycero-3-phosphocholine + a fatty acid + H(+). Functionally, PLA2 catalyzes the calcium-dependent hydrolysis of the 2-acyl groups in 3-sn-phosphoglycerides. The chain is Acidic phospholipase A2 5 from Tropidechis carinatus (Australian rough-scaled snake).